A 134-amino-acid polypeptide reads, in one-letter code: Profilin-2 (134 aa).

Cys13 and Cys118 are joined by a disulfide. The short motif at 84-100 is the Involved in PIP2 interaction element; that stretch reads AVIRGKKGSGGITIKKT. Position 114 is a phosphothreonine (Thr114).

Belongs to the profilin family. In terms of assembly, occurs in many kinds of cells as a complex with monomeric actin in a 1:1 ratio. In terms of processing, phosphorylated by MAP kinases.

Its subcellular location is the cytoplasm. The protein localises to the cytoskeleton. Binds to actin and affects the structure of the cytoskeleton. At high concentrations, profilin prevents the polymerization of actin, whereas it enhances it at low concentrations. The sequence is that of Profilin-2 from Olea europaea (Common olive).